The following is a 155-amino-acid chain: DNA gyrase inhibitor (155 aa).

The protein belongs to the DNA gyrase inhibitor family. Interacts with DNA gyrase.

Its subcellular location is the cytoplasm. In terms of biological role, inhibits the supercoiling activity of DNA gyrase. Acts by inhibiting DNA gyrase at an early step, prior to (or at the step of) binding of DNA by the gyrase. It protects cells against toxins that target DNA gyrase, by inhibiting activity of these toxins and reducing the formation of lethal double-strand breaks in the cell. In Erwinia billingiae (strain Eb661), this protein is DNA gyrase inhibitor.